A 288-amino-acid polypeptide reads, in one-letter code: Aquaporin PIP2-4 (288 aa).

Residues 1–24 (MAKDIEASGPEAGEFSAKDYTDPP) form a disordered region. 2 helical membrane-spanning segments follow: residues 42–62 (AVIA…ATVI) and 79–99 (CGGV…FILV). The NPA 1 signature appears at 111-113 (NPA). The next 3 helical transmembrane spans lie at 130 to 150 (LLYI…VKGF), 172 to 192 (GTGL…VFSA), and 206 to 226 (VLAP…TIPI). Residues 232-234 (NPA) carry the NPA 2 motif. Residues 254–274 (IFWVGPLIGAAIAAAYHQYVL) traverse the membrane as a helical segment.

This sequence belongs to the MIP/aquaporin (TC 1.A.8) family. PIP (TC 1.A.8.11) subfamily. As to quaternary structure, homomers. May interact with PIP1-2 to form heteromers. In terms of tissue distribution, expressed in the root growing zone at 5-6 mm from the root tip.

Its subcellular location is the cell membrane. Functionally, water channel required to facilitate the transport of water across cell membrane. Active as homomers. Increased activity when heteromerization with PIP1-2. This chain is Aquaporin PIP2-4 (PIP2-4), found in Zea mays (Maize).